A 63-amino-acid chain; its full sequence is Large ribosomal subunit protein bL28 (63 aa).

Belongs to the bacterial ribosomal protein bL28 family.

This chain is Large ribosomal subunit protein bL28, found in Pelobacter propionicus (strain DSM 2379 / NBRC 103807 / OttBd1).